Consider the following 186-residue polypeptide: Methylamine dehydrogenase light chain (186 aa).

Residues 1 to 57 (MKKNTGFDSGIEKLARKTASKTGRRSFIGKLGGFLVGSALLPLLPVDRRGRMNEAHA) constitute a signal peptide (tat-type signal). 6 disulfides stabilise this stretch: cysteine 78/cysteine 143, cysteine 84/cysteine 116, cysteine 91/cysteine 176, cysteine 93/cysteine 141, cysteine 101/cysteine 132, and cysteine 133/cysteine 164. Tryptophan 112 is modified (tryptophylquinone). A cross-link (tryptophan tryptophylquinone (Trp-Trp)) is located at residues 112-163 (WVASCFNPGDGQTYLIAYRDCCGKQTCGRCNCVNVQGELPVYRPEFNNDIVW).

The protein belongs to the aromatic amine dehydrogenase light chain family. In terms of assembly, heterotetramer of two light and two heavy chains. The cofactor is tryptophan tryptophylquinone residue. Predicted to be exported by the Tat system. The position of the signal peptide cleavage has not been experimentally proven. Post-translationally, tryptophan tryptophylquinone (TTQ) is formed by oxidation of the indole ring of a tryptophan to form tryptophylquinone followed by covalent cross-linking with another tryptophan residue.

The protein localises to the periplasm. The enzyme catalyses 2 oxidized [amicyanin] + methylamine + H2O = 2 reduced [amicyanin] + formaldehyde + NH4(+) + 2 H(+). It functions in the pathway one-carbon metabolism; methylamine degradation; formaldehyde from methylamine: step 1/1. Functionally, methylamine dehydrogenase carries out the oxidation of methylamine. Electrons are passed from methylamine dehydrogenase to amicyanin. The polypeptide is Methylamine dehydrogenase light chain (mauA) (Methylobacillus flagellatus (strain ATCC 51484 / DSM 6875 / VKM B-1610 / KT)).